Consider the following 158-residue polypeptide: SsrA-binding protein (158 aa).

It belongs to the SmpB family.

Its subcellular location is the cytoplasm. Functionally, required for rescue of stalled ribosomes mediated by trans-translation. Binds to transfer-messenger RNA (tmRNA), required for stable association of tmRNA with ribosomes. tmRNA and SmpB together mimic tRNA shape, replacing the anticodon stem-loop with SmpB. tmRNA is encoded by the ssrA gene; the 2 termini fold to resemble tRNA(Ala) and it encodes a 'tag peptide', a short internal open reading frame. During trans-translation Ala-aminoacylated tmRNA acts like a tRNA, entering the A-site of stalled ribosomes, displacing the stalled mRNA. The ribosome then switches to translate the ORF on the tmRNA; the nascent peptide is terminated with the 'tag peptide' encoded by the tmRNA and targeted for degradation. The ribosome is freed to recommence translation, which seems to be the essential function of trans-translation. This chain is SsrA-binding protein, found in Hydrogenovibrio crunogenus (strain DSM 25203 / XCL-2) (Thiomicrospira crunogena).